The chain runs to 323 residues: Protein translocase subunit SecF (323 aa).

6 consecutive transmembrane segments (helical) span residues 19 to 39 (GVIV…FKGF), 138 to 158 (ILSL…RYEW), 162 to 182 (LASV…VIVF), 189 to 209 (EVIA…IIIF), 244 to 264 (LTVF…IIGF), and 269 to 289 (LIGT…VALL).

It belongs to the SecD/SecF family. SecF subfamily. In terms of assembly, forms a complex with SecD. Part of the essential Sec protein translocation apparatus which comprises SecA, SecYEG and auxiliary proteins SecDF-YajC and YidC.

It is found in the cell inner membrane. In terms of biological role, part of the Sec protein translocase complex. Interacts with the SecYEG preprotein conducting channel. SecDF uses the proton motive force (PMF) to complete protein translocation after the ATP-dependent function of SecA. This chain is Protein translocase subunit SecF, found in Helicobacter pylori (strain J99 / ATCC 700824) (Campylobacter pylori J99).